We begin with the raw amino-acid sequence, 279 residues long: NLP effector protein 9 (279 aa).

The N-terminal stretch at 1–19 (MKISNLLGVLVVFLAVVKG) is a signal peptide. The short motif at 151-161 (AIMYAWYFPDI) is the Conserved undecapeptide motif element. Asn-176 carries an N-linked (GlcNAc...) asparagine glycan.

It belongs to the Necrosis inducing protein (NPP1) family.

It localises to the secreted. In terms of biological role, secreted effector that acts as a pathogen-associated molecular pattern (PAMP) recognized by the plant immune system. Seems not to induce necrosis in Nicotiana benthamiana leaves. The polypeptide is NLP effector protein 9 (Plasmopara viticola (Downy mildew of grapevine)).